We begin with the raw amino-acid sequence, 227 residues long: HTH-type transcriptional regulator ArcR (227 aa).

Position 41 to 130 (41 to 130 (VRRYNKGQII…LEYLCKNHDD (90 aa))) interacts with a nucleoside 3',5'-cyclic phosphate. Residues 156 to 227 (KLARERIEKV…KNGKNWMVIK (72 aa)) enclose the HTH crp-type domain. The segment at residues 189 to 208 (IQLLSDLAGISRETTGHIVH) is a DNA-binding region (H-T-H motif).

It is found in the cytoplasm. In terms of biological role, positively regulates the expression of the arcABDCR operon under anaerobic conditions, thus playing an essential role in arginine catabolism. May also control the expression of genes encoding proteins which are involved in anaerobic metabolism. Can bind cyclic AMP. In Staphylococcus haemolyticus (strain JCSC1435), this protein is HTH-type transcriptional regulator ArcR (arcR).